We begin with the raw amino-acid sequence, 117 residues long: Large ribosomal subunit protein bL19 (117 aa).

This sequence belongs to the bacterial ribosomal protein bL19 family.

Its function is as follows. This protein is located at the 30S-50S ribosomal subunit interface and may play a role in the structure and function of the aminoacyl-tRNA binding site. This is Large ribosomal subunit protein bL19 from Alkaliphilus metalliredigens (strain QYMF).